The chain runs to 529 residues: MSTRLEREVARRRTFAIISHPDAGKTTLTEKLLLFGGAIQMAGAVKARKSGRHATSDWMAMERERGISVTTSVMQFPYGDHMVNLLDTPGHQDFSEDTYRVLTAVDSALVVIDVAKGVEAQTRKLMDVCRLRDTPVMTFINKLDRDGLPPLDVMADIEENLRIECVPLTWPIGMGSDFKGTYNLLKRELHLFSASHHGRIQEGILIRDLDDPLLDEHLGPQADALRMDLALLEEAGTPFSREKYLRGEQTPVFFGSAINNFGVRELLDNFVDLAPAPRPRPAITREVSPHEESFTGVVFKIQANMDKAHRDRMAFMRICSGTFTRGMKLRHHRVGKDVTVANATIFLAQDRSGVEEAFPGDIIGIPNHGTIKIGDTFTESKEELKFTGIPSFSPEHFRRVRLRNPLKAKQLQKGLEQLAEEGAVQLFRPQVNNDYILGAVGVLQFDVIISRLHDEYSVEAAYEPCSIHTARWLHCNDRKVFAEFCDYYSAELAIDAEGALAYLAPNPWRLESAMERYPAVEFRTTREIR.

Residues 10 to 278 form the tr-type G domain; it reads ARRRTFAIIS…NFVDLAPAPR (269 aa). Residues 19-26, 87-91, and 141-144 each bind GTP; these read SHPDAGKT, DTPGH, and NKLD.

The protein belongs to the TRAFAC class translation factor GTPase superfamily. Classic translation factor GTPase family. PrfC subfamily.

It localises to the cytoplasm. Its function is as follows. Increases the formation of ribosomal termination complexes and stimulates activities of RF-1 and RF-2. It binds guanine nucleotides and has strong preference for UGA stop codons. It may interact directly with the ribosome. The stimulation of RF-1 and RF-2 is significantly reduced by GTP and GDP, but not by GMP. This chain is Peptide chain release factor 3, found in Nitratidesulfovibrio vulgaris (strain ATCC 29579 / DSM 644 / CCUG 34227 / NCIMB 8303 / VKM B-1760 / Hildenborough) (Desulfovibrio vulgaris).